Here is a 302-residue protein sequence, read N- to C-terminus: Capsid protein (302 aa).

A disordered region spans residues 217–302 (FHSGDAAKQS…HSSPQQTPKK (86 aa)). The segment covering 254 to 271 (PRAGTPSSQKSGQSGQTT) has biased composition (low complexity). The segment covering 288 to 302 (HKSTPHSSPQQTPKK) has biased composition (polar residues).

The protein resides in the virion. Functionally, capsid protein self-assembles to form a flexuous, filamentous capsid (Potential). The capsid encapsulates the single-stranded RNA genome. This Botryotinia fuckeliana (Noble rot fungus) protein is Capsid protein.